The chain runs to 521 residues: Phospholipase C B (521 aa).

Positions 1 to 39 (MGSEHPVDGMTRRQFFAKAAAATTAGAFMSLAGPIIEKA) form a signal peptide, tat-type signal. Residues 501–521 (FPQSMPTQETAPTRGIPSGLC) form a disordered region.

Belongs to the bacterial phospholipase C family. Predicted to be exported by the Tat system. The position of the signal peptide cleavage has not been experimentally proven.

It is found in the secreted. It localises to the cell wall. The enzyme catalyses a 1,2-diacyl-sn-glycero-3-phosphocholine + H2O = phosphocholine + a 1,2-diacyl-sn-glycerol + H(+). Functionally, involved in virulence. Induces cytotoxic effects on mouse macrophage cell lines, via direct or indirect enzymatic hydrolysis of cell membrane phospholipids. Hydrolyzes phosphatidylcholine. This chain is Phospholipase C B, found in Mycobacterium tuberculosis (strain CDC 1551 / Oshkosh).